The primary structure comprises 360 residues: Phospho-N-acetylmuramoyl-pentapeptide-transferase (360 aa).

The next 10 membrane-spanning stretches (helical) occupy residues 25 to 45, 73 to 93, 97 to 117, 132 to 152, 168 to 188, 199 to 219, 236 to 256, 263 to 283, 288 to 308, and 338 to 358; these read RGIL…PWMI, TMGG…WADL, YVWV…VDDY, WKYF…YMTA, VSIP…VGSS, GLAI…CYLS, AGEL…FLWF, VFMG…IAVI, VVLF…IIQV, and VIVR…ATLK.

It belongs to the glycosyltransferase 4 family. MraY subfamily. It depends on Mg(2+) as a cofactor.

It is found in the cell inner membrane. It catalyses the reaction UDP-N-acetyl-alpha-D-muramoyl-L-alanyl-gamma-D-glutamyl-meso-2,6-diaminopimeloyl-D-alanyl-D-alanine + di-trans,octa-cis-undecaprenyl phosphate = di-trans,octa-cis-undecaprenyl diphospho-N-acetyl-alpha-D-muramoyl-L-alanyl-D-glutamyl-meso-2,6-diaminopimeloyl-D-alanyl-D-alanine + UMP. It participates in cell wall biogenesis; peptidoglycan biosynthesis. In terms of biological role, catalyzes the initial step of the lipid cycle reactions in the biosynthesis of the cell wall peptidoglycan: transfers peptidoglycan precursor phospho-MurNAc-pentapeptide from UDP-MurNAc-pentapeptide onto the lipid carrier undecaprenyl phosphate, yielding undecaprenyl-pyrophosphoryl-MurNAc-pentapeptide, known as lipid I. The polypeptide is Phospho-N-acetylmuramoyl-pentapeptide-transferase (Ectopseudomonas mendocina (strain ymp) (Pseudomonas mendocina)).